We begin with the raw amino-acid sequence, 61 residues long: Metallothionein-2E (61 aa).

Position 1 is an N-acetylmethionine (M1). The interval 1 to 29 is beta; sequence MDPNCSCATRDSCACASSCKCKECKCTSC. 20 residues coordinate a divalent metal cation: C5, C7, C13, C15, C19, C21, C24, C26, C29, C33, C34, C36, C37, C41, C44, C48, C50, C57, C59, and C60. Residues 30 to 61 form an alpha region; it reads KKSCCSCCPAGCTKCAQGCICKGALDKCSCCA.

It belongs to the metallothionein superfamily. Type 1 family. As to quaternary structure, monomer.

Metallothioneins have a high content of cysteine residues that bind various heavy metals; these proteins are transcriptionally regulated by both heavy metals and glucocorticoids. The chain is Metallothionein-2E from Oryctolagus cuniculus (Rabbit).